The following is a 119-amino-acid chain: Large ribosomal subunit protein uL18 (119 aa).

This sequence belongs to the universal ribosomal protein uL18 family. Part of the 50S ribosomal subunit; part of the 5S rRNA/L5/L18/L25 subcomplex. Contacts the 5S and 23S rRNAs.

Functionally, this is one of the proteins that bind and probably mediate the attachment of the 5S RNA into the large ribosomal subunit, where it forms part of the central protuberance. The sequence is that of Large ribosomal subunit protein uL18 from Xylella fastidiosa (strain M23).